The chain runs to 76 residues: Small ribosomal subunit protein bS18 (76 aa).

Belongs to the bacterial ribosomal protein bS18 family. Part of the 30S ribosomal subunit. Forms a tight heterodimer with protein bS6.

Functionally, binds as a heterodimer with protein bS6 to the central domain of the 16S rRNA, where it helps stabilize the platform of the 30S subunit. The chain is Small ribosomal subunit protein bS18 from Methylococcus capsulatus (strain ATCC 33009 / NCIMB 11132 / Bath).